We begin with the raw amino-acid sequence, 87 residues long: Conotoxin Bt15a (87 aa).

Residues 1 to 23 (MEKLTILVLVATVLLAIQVLVQS) form the signal peptide. The propeptide occupies 24 to 49 (DGEKPLKRRVKQYAAKRLSALMRGPR). Pyrrolidone carboxylic acid is present on Q50.

It belongs to the conotoxin O2 superfamily. In terms of processing, contains 4 disulfide bonds. In terms of tissue distribution, expressed by the venom duct.

Its subcellular location is the secreted. The chain is Conotoxin Bt15a from Conus betulinus (Beech cone).